Reading from the N-terminus, the 520-residue chain is FNIP repeat-containing protein DDB_G0274063/DDB_G0272642 (520 aa).

Disordered stretches follow at residues 47 to 86 (QQQSNNNNNNNNNNNNNNNNNNFINFSNHTNNINNNIDNR) and 100 to 121 (NISSSSPYTLTSTPSSSSSSSS). Residues 51–84 (NNNNNNNNNNNNNNNNNNFINFSNHTNNINNNID) are compositionally biased toward low complexity. 4 FNIP repeats span residues 242 to 285 (YNNN…FGES), 286 to 331 (FNQD…FGLS), 332 to 406 (YNQP…FGVQ), and 453 to 496 (FNQQ…FHNS).

This is FNIP repeat-containing protein DDB_G0274063/DDB_G0272642 from Dictyostelium discoideum (Social amoeba).